The primary structure comprises 122 residues: UPF0231 protein VP2494 (122 aa).

The protein belongs to the UPF0231 family.

This is UPF0231 protein VP2494 from Vibrio parahaemolyticus serotype O3:K6 (strain RIMD 2210633).